A 486-amino-acid chain; its full sequence is Transcription factor aptf-4 (486 aa).

Disordered regions lie at residues 25 to 49 (CEPS…SAKM) and 150 to 173 (LSTT…NQEK). The span at 150–169 (LSTTSANFTPDWNTTTNGPC) shows a compositional bias: polar residues. Residues 301-430 (QRQRKVTCFS…IVEQAALYCE (130 aa)) form an H-S-H (helix-span-helix), dimerization region.

Belongs to the AP-2 family. In terms of assembly, binds DNA as a dimer.

It localises to the nucleus. In terms of biological role, sequence-specific DNA-binding protein that interacts with enhancer elements to regulate transcription of selected genes. Required for neuroblast and epidermal morphogenesis, perhaps acting in cooperation with transcription factor aptf-2. This is Transcription factor aptf-4 from Caenorhabditis elegans.